We begin with the raw amino-acid sequence, 130 residues long: Small ribosomal subunit protein uS8 (130 aa).

The protein belongs to the universal ribosomal protein uS8 family. As to quaternary structure, part of the 30S ribosomal subunit. Contacts proteins S5 and S12.

Functionally, one of the primary rRNA binding proteins, it binds directly to 16S rRNA central domain where it helps coordinate assembly of the platform of the 30S subunit. The sequence is that of Small ribosomal subunit protein uS8 from Haemophilus ducreyi (strain 35000HP / ATCC 700724).